The chain runs to 348 residues: Holliday junction branch migration complex subunit RuvB (348 aa).

The interval 1–183 (MAPQPRRLIA…FGIPIRLEYY (183 aa)) is large ATPase domain (RuvB-L). Residues L22, R23, G64, K67, T68, T69, 130–132 (EDF), R173, Y183, and R220 each bind ATP. Residue T68 participates in Mg(2+) binding. Residues 184-254 (TVEELECIVR…VADRALRLLD (71 aa)) are small ATPAse domain (RuvB-S). The interval 257–348 (HIGLDQMDRR…FQLFSEGGEE (92 aa)) is head domain (RuvB-H). DNA is bound by residues R293, R312, and R317.

This sequence belongs to the RuvB family. In terms of assembly, homohexamer. Forms an RuvA(8)-RuvB(12)-Holliday junction (HJ) complex. HJ DNA is sandwiched between 2 RuvA tetramers; dsDNA enters through RuvA and exits via RuvB. An RuvB hexamer assembles on each DNA strand where it exits the tetramer. Each RuvB hexamer is contacted by two RuvA subunits (via domain III) on 2 adjacent RuvB subunits; this complex drives branch migration. In the full resolvosome a probable DNA-RuvA(4)-RuvB(12)-RuvC(2) complex forms which resolves the HJ.

It localises to the cytoplasm. The catalysed reaction is ATP + H2O = ADP + phosphate + H(+). Its function is as follows. The RuvA-RuvB-RuvC complex processes Holliday junction (HJ) DNA during genetic recombination and DNA repair, while the RuvA-RuvB complex plays an important role in the rescue of blocked DNA replication forks via replication fork reversal (RFR). RuvA specifically binds to HJ cruciform DNA, conferring on it an open structure. The RuvB hexamer acts as an ATP-dependent pump, pulling dsDNA into and through the RuvAB complex. RuvB forms 2 homohexamers on either side of HJ DNA bound by 1 or 2 RuvA tetramers; 4 subunits per hexamer contact DNA at a time. Coordinated motions by a converter formed by DNA-disengaged RuvB subunits stimulates ATP hydrolysis and nucleotide exchange. Immobilization of the converter enables RuvB to convert the ATP-contained energy into a lever motion, pulling 2 nucleotides of DNA out of the RuvA tetramer per ATP hydrolyzed, thus driving DNA branch migration. The RuvB motors rotate together with the DNA substrate, which together with the progressing nucleotide cycle form the mechanistic basis for DNA recombination by continuous HJ branch migration. Branch migration allows RuvC to scan DNA until it finds its consensus sequence, where it cleaves and resolves cruciform DNA. This is Holliday junction branch migration complex subunit RuvB from Methylocella silvestris (strain DSM 15510 / CIP 108128 / LMG 27833 / NCIMB 13906 / BL2).